We begin with the raw amino-acid sequence, 630 residues long: 1-deoxy-D-xylulose-5-phosphate synthase (630 aa).

Residues histidine 87 and 128-130 (GHS) contribute to the thiamine diphosphate site. Residue aspartate 159 participates in Mg(2+) binding. Thiamine diphosphate-binding positions include 160–161 (GA), asparagine 188, phenylalanine 295, and glutamate 377. Position 188 (asparagine 188) interacts with Mg(2+).

This sequence belongs to the transketolase family. DXPS subfamily. As to quaternary structure, homodimer. It depends on Mg(2+) as a cofactor. Thiamine diphosphate is required as a cofactor.

It catalyses the reaction D-glyceraldehyde 3-phosphate + pyruvate + H(+) = 1-deoxy-D-xylulose 5-phosphate + CO2. It functions in the pathway metabolic intermediate biosynthesis; 1-deoxy-D-xylulose 5-phosphate biosynthesis; 1-deoxy-D-xylulose 5-phosphate from D-glyceraldehyde 3-phosphate and pyruvate: step 1/1. Catalyzes the acyloin condensation reaction between C atoms 2 and 3 of pyruvate and glyceraldehyde 3-phosphate to yield 1-deoxy-D-xylulose-5-phosphate (DXP). This chain is 1-deoxy-D-xylulose-5-phosphate synthase, found in Pseudomonas syringae pv. syringae (strain B728a).